Here is a 570-residue protein sequence, read N- to C-terminus: Nucleoprotein (570 aa).

The binding site for the cap structure m7GTP stretch occupies residues 54–236; it reads LRKTKRTDDD…ITKEESSINI (183 aa). The interval 332-356 is disordered; sequence DLTKKPDAVPEPGAAPRPAERKGQN. 2 residues coordinate Mg(2+): aspartate 386 and glutamate 388. 2 residues coordinate Mn(2+): aspartate 386 and glutamate 388. Residues glutamate 396, cysteine 503, histidine 506, and cysteine 531 each contribute to the Zn(2+) site. Residue aspartate 535 coordinates Mg(2+). Position 535 (aspartate 535) interacts with Mn(2+).

It belongs to the arenaviridae nucleocapsid protein family. Homomultimerizes to form the nucleocapsid. Binds to viral genomic RNA. Interacts with glycoprotein G2. Interacts with protein Z; this interaction probably directs the encapsidated genome to budding sites. Interacts with protein L; this interaction does not interfere with Z-L interaction. Interacts with host IKBKE (via Protein kinase domain); the interaction inhibits IKBKE kinase activity.

The protein localises to the virion. It localises to the host cytoplasm. In terms of biological role, encapsidates the genome, protecting it from nucleases. The encapsidated genomic RNA is termed the nucleocapsid (NC). Serves as template for viral transcription and replication. The increased presence of protein N in host cell does not seem to trigger the switch from transcription to replication as observed in other negative strain RNA viruses. Through the interaction with host IKBKE, strongly inhibits the phosphorylation and nuclear translocation of host IRF3, a protein involved in interferon activation pathway, leading to the inhibition of interferon-beta and IRF3-dependent promoters activation. Also encodes a functional 3'-5' exoribonuclease that degrades preferentially dsRNA substrates and thereby participates in the suppression of interferon induction. This is Nucleoprotein from Artibeus (neotropical fruit bats).